Here is a 217-residue protein sequence, read N- to C-terminus: MPMPTEERVSQLVAGLVERRGFDLEGVEITRAGSRADAQPRVTVVVDSDGAADLDAVAELSSEMSVVLDDTDIFGDSPYLLEVTTPGVDRPLTAPRHWRRAQGRKVRITLRPGAEPPDPGGSAGFEARVGVLDGEQIALVLGGKRNPHRVRVPLADIERAVVQVEFSPPGARELELAGGVAPGRPDPGTDRAIAADGAISEETSTAAASDPTEGIEE.

This sequence belongs to the RimP family.

It localises to the cytoplasm. Functionally, required for maturation of 30S ribosomal subunits. The chain is Ribosome maturation factor RimP from Nocardia farcinica (strain IFM 10152).